The primary structure comprises 604 residues: Protein glass (604 aa).

Disordered regions lie at residues 111–139 (ISTTPPASSGNGSSNNGAGGGSSGNHGYW), 199–237 (NSHNHGQMHSQHQQHQHQQSQVQASHVGNSLLQSSGGNN), 359–400 (LPPL…SPTS), and 414–434 (EDEEDSNEDLDGDEGSSGGEM). Low complexity-rich tracts occupy residues 117 to 126 (ASSGNGSSNN) and 200 to 237 (SHNHGQMHSQHQQHQHQQSQVQASHVGNSLLQSSGGNN). The segment covering 414–427 (EDEEDSNEDLDGDE) has biased composition (acidic residues). 5 C2H2-type zinc fingers span residues 437–459 (NLCRLCGKTYARPSTLKTHLRTH), 465–487 (YRCPDCNKSFSQAANLTAHVRTH), 493–515 (FRCPICDRRFSQSSSVTTHMRTH), 521–543 (YRCSSCKKSFSDSSTLTKHLRIH), and 549–571 (YQCKLCLLRFSQSGNLNRHMRVH). A disordered region spans residues 566–604 (RHMRVHGNNNSSNGSNGATGVGGESSTGSGVGGGNSLLT). Positions 572-581 (GNNNSSNGSN) are enriched in low complexity. The segment covering 582-604 (GATGVGGESSTGSGVGGGNSLLT) has biased composition (gly residues).

It localises to the nucleus. Its function is as follows. Transcription factor required for gene expression specific to photoreceptor cells. This is Protein glass (gl) from Drosophila melanogaster (Fruit fly).